A 432-amino-acid polypeptide reads, in one-letter code: Amino-acid acetyltransferase (432 aa).

Residues 286–425 (ESLREATIED…ASLYNYQRNS (140 aa)) enclose the N-acetyltransferase domain.

This sequence belongs to the acetyltransferase family. ArgA subfamily.

The protein localises to the cytoplasm. The enzyme catalyses L-glutamate + acetyl-CoA = N-acetyl-L-glutamate + CoA + H(+). Its pathway is amino-acid biosynthesis; L-arginine biosynthesis; N(2)-acetyl-L-ornithine from L-glutamate: step 1/4. The chain is Amino-acid acetyltransferase from Ectopseudomonas mendocina (strain ymp) (Pseudomonas mendocina).